The following is a 355-amino-acid chain: MIEKLQVIEEKYLELEKKISDPEIINNNQEWQKLMKEHSNLQPIVEKFREYKRIIKTIEEAEELLDTNLDEDFEKLVKEELNQAKEQKEIVERELKILLLPKDPNDEKNVIMEIRAGAGGEEAALFAAELFRMYSRYAERKNWKVEVMSTSESDLDGFKEVIFMISGKGAYSRLKYESGVHRVQRVPVTESGGRIHTSTATVAVLPEVEDVEVEIREEDLEIETFRAGGAGGQHVNKTESAVRITHKPTGIVVSCQDERSQHANRDRAMKILRARLYDYYQSLQQKEIESQRRSQVGTGDRSERIRTYNFPQGRVTDHRIGLTLYKLEQVLDGDLDEIIDALITHFQTERLKEVG.

Q233 is modified (N5-methylglutamine).

Belongs to the prokaryotic/mitochondrial release factor family. Methylated by PrmC. Methylation increases the termination efficiency of RF1.

Its subcellular location is the cytoplasm. In terms of biological role, peptide chain release factor 1 directs the termination of translation in response to the peptide chain termination codons UAG and UAA. The chain is Peptide chain release factor 1 from Caldicellulosiruptor saccharolyticus (strain ATCC 43494 / DSM 8903 / Tp8T 6331).